Here is a 725-residue protein sequence, read N- to C-terminus: ATP-dependent RNA helicase DRS1 (725 aa).

A disordered region spans residues 14–184; that stretch reads DFVPTISDSE…AEEKVEEDTA (171 aa). Residues 21 to 33 show a composition bias toward acidic residues; the sequence is DSEEDVPDLDSDE. Basic and acidic residues-rich tracts occupy residues 85-95 and 107-116; these read EEKKDVDLDKI and HVDEAEKSES. Acidic residues-rich tracts occupy residues 117 to 127 and 139 to 184; these read EESESDDEDLA and PEGE…EDTA. The Q motif motif lies at 206-234; that stretch reads KTFNDLALSRPVMKGLSNLGYVKPSPIQS. Residues 237–412 enclose the Helicase ATP-binding domain; the sequence is IPIALLGKDI…SLSLKRPVRI (176 aa). ATP is bound at residue 250–257; sequence AVTGSGKT. The DEAD box signature appears at 360–363; the sequence is DEAD. The Helicase C-terminal domain maps to 423-613; it reads KLTQEFVRIR…NMDQTVQDIL (191 aa). A coiled-coil region spans residues 607–686; that stretch reads QTVQDILVEE…KRKRNEAMED (80 aa). The disordered stretch occupies residues 646–725; it reads PKRTWFQSEK…KKKGKSKGKR (80 aa). The segment covering 669-707 has biased composition (basic and acidic residues); the sequence is TKKEVNSKKRKRNEAMEDGHKRSYKKTQSDRTADQERTM. Residues 708-725 are compositionally biased toward basic residues; it reads KKQAKANGKKKGKSKGKR.

This sequence belongs to the DEAD box helicase family. DDX27/DRS1 subfamily. Associates with pre-ribosomal particles.

It is found in the nucleus. The protein resides in the nucleolus. It catalyses the reaction ATP + H2O = ADP + phosphate + H(+). Its function is as follows. ATP-binding RNA helicase involved in ribosome assembly. The protein is ATP-dependent RNA helicase DRS1 (DRS1) of Candida glabrata (strain ATCC 2001 / BCRC 20586 / JCM 3761 / NBRC 0622 / NRRL Y-65 / CBS 138) (Yeast).